Consider the following 747-residue polypeptide: Histone-lysine N-methyltransferase EZH1 (747 aa).

The segment at Asp188–Phe231 is disordered. Over residues His194–Val211 the composition is skewed to basic and acidic residues. Lys327 participates in a covalent cross-link: Glycyl lysine isopeptide (Lys-Gly) (interchain with G-Cter in SUMO2). The segment at Val368 to Lys414 is disordered. Residues Ser369 to Ala381 are compositionally biased toward low complexity. Positions Glu382 to Gly393 are enriched in basic and acidic residues. A compositionally biased stretch (polar residues) spans Asp395 to Lys414. Residues Gln491–Lys496 carry the Nuclear localization signal motif. The CXC domain maps to Cys504–Ser606. Positions Lys613 to Arg728 constitute an SET domain.

This sequence belongs to the class V-like SAM-binding methyltransferase superfamily. Histone-lysine methyltransferase family. EZ subfamily. Component of the PRC2/EED-EZH1 complex, which includes EED, EZH1, SUZ12, RBBP4 and AEBP2. The PRC2/EED-EZH1 is less abundant than the PRC2/EED-EZH2 complex, has weak methyltransferase activity and compacts chromatin in the absence of the methyltransferase cofactor S-adenosyl-L-methionine (SAM). Interacts with EZHIP; the interaction blocks EZH1 methyltransferase activity. As to expression, expressed at high levels in kidney, adrenal gland, testis and brain.

It localises to the nucleus. The enzyme catalyses L-lysyl(27)-[histone H3] + 3 S-adenosyl-L-methionine = N(6),N(6),N(6)-trimethyl-L-lysyl(27)-[histone H3] + 3 S-adenosyl-L-homocysteine + 3 H(+). Functionally, polycomb group (PcG) protein. Catalytic subunit of the PRC2/EED-EZH1 complex, which methylates 'Lys-27' of histone H3, leading to transcriptional repression of the affected target gene. Able to mono-, di- and trimethylate 'Lys-27' of histone H3 to form H3K27me1, H3K27me2 and H3K27me3, respectively. Required for embryonic stem cell derivation and self-renewal, suggesting that it is involved in safeguarding embryonic stem cell identity. Compared to EZH2-containing complexes, it is less abundant in embryonic stem cells, has weak methyltransferase activity and plays a less critical role in forming H3K27me3, which is required for embryonic stem cell identity and proper differentiation. In Mus musculus (Mouse), this protein is Histone-lysine N-methyltransferase EZH1 (Ezh1).